The following is a 150-amino-acid chain: Large ribosomal subunit protein bL9 (150 aa).

Belongs to the bacterial ribosomal protein bL9 family.

Functionally, binds to the 23S rRNA. The sequence is that of Large ribosomal subunit protein bL9 from Corynebacterium aurimucosum (strain ATCC 700975 / DSM 44827 / CIP 107346 / CN-1) (Corynebacterium nigricans).